The primary structure comprises 424 residues: Histidine--tRNA ligase (424 aa).

This sequence belongs to the class-II aminoacyl-tRNA synthetase family. In terms of assembly, homodimer.

It localises to the cytoplasm. The catalysed reaction is tRNA(His) + L-histidine + ATP = L-histidyl-tRNA(His) + AMP + diphosphate + H(+). The chain is Histidine--tRNA ligase from Shewanella frigidimarina (strain NCIMB 400).